The sequence spans 126 residues: Prefoldin subunit beta (126 aa).

This sequence belongs to the prefoldin subunit beta family. Heterohexamer of two alpha and four beta subunits.

It localises to the cytoplasm. Its function is as follows. Molecular chaperone capable of stabilizing a range of proteins. Seems to fulfill an ATP-independent, HSP70-like function in archaeal de novo protein folding. The polypeptide is Prefoldin subunit beta (Saccharolobus islandicus (strain Y.N.15.51 / Yellowstone #2) (Sulfolobus islandicus)).